We begin with the raw amino-acid sequence, 330 residues long: Sulfate/thiosulfate import ATP-binding protein CysA (330 aa).

An ABC transporter domain is found at 3 to 237; that stretch reads IEIRNINKQF…PASEFVYHFL (235 aa). 35-42 is a binding site for ATP; that stretch reads GPSGCGKT.

Belongs to the ABC transporter superfamily. Sulfate/tungstate importer (TC 3.A.1.6) family. The complex is composed of two ATP-binding proteins (CysA), two transmembrane proteins (CysT and CysW) and a solute-binding protein (CysP).

The protein localises to the cell inner membrane. It carries out the reaction sulfate(out) + ATP + H2O = sulfate(in) + ADP + phosphate + H(+). It catalyses the reaction thiosulfate(out) + ATP + H2O = thiosulfate(in) + ADP + phosphate + H(+). Part of the ABC transporter complex CysAWTP involved in sulfate/thiosulfate import. Responsible for energy coupling to the transport system. The protein is Sulfate/thiosulfate import ATP-binding protein CysA of Pectobacterium atrosepticum (strain SCRI 1043 / ATCC BAA-672) (Erwinia carotovora subsp. atroseptica).